A 184-amino-acid polypeptide reads, in one-letter code: Protein Syd (184 aa).

It belongs to the Syd family.

The protein localises to the cell inner membrane. In terms of biological role, interacts with the SecY protein in vivo. May bind preferentially to an uncomplexed state of SecY, thus functioning either as a chelating agent for excess SecY in the cell or as a regulatory factor that negatively controls the translocase function. The chain is Protein Syd from Photorhabdus laumondii subsp. laumondii (strain DSM 15139 / CIP 105565 / TT01) (Photorhabdus luminescens subsp. laumondii).